Reading from the N-terminus, the 329-residue chain is GTP 3',8-cyclase (329 aa).

The region spanning 8 to 234 (AFARKFYYLR…QLRQRSDGPA (227 aa)) is the Radical SAM core domain. Arg17 lines the GTP pocket. Cys24 and Cys28 together coordinate [4Fe-4S] cluster. Tyr30 is a binding site for S-adenosyl-L-methionine. Cys31 is a [4Fe-4S] cluster binding site. Position 68 (Arg68) interacts with GTP. Position 72 (Gly72) interacts with S-adenosyl-L-methionine. Thr99 contributes to the GTP binding site. Ser123 contacts S-adenosyl-L-methionine. A GTP-binding site is contributed by Lys160. Met194 contributes to the S-adenosyl-L-methionine binding site. [4Fe-4S] cluster-binding residues include Cys257 and Cys260. 262-264 (RLR) contributes to the GTP binding site. Position 274 (Cys274) interacts with [4Fe-4S] cluster.

Belongs to the radical SAM superfamily. MoaA family. Monomer and homodimer. [4Fe-4S] cluster serves as cofactor.

The catalysed reaction is GTP + AH2 + S-adenosyl-L-methionine = (8S)-3',8-cyclo-7,8-dihydroguanosine 5'-triphosphate + 5'-deoxyadenosine + L-methionine + A + H(+). Its pathway is cofactor biosynthesis; molybdopterin biosynthesis. Functionally, catalyzes the cyclization of GTP to (8S)-3',8-cyclo-7,8-dihydroguanosine 5'-triphosphate. The sequence is that of GTP 3',8-cyclase from Escherichia coli O7:K1 (strain IAI39 / ExPEC).